The sequence spans 164 residues: SsrA-binding protein (164 aa).

This sequence belongs to the SmpB family.

It is found in the cytoplasm. In terms of biological role, required for rescue of stalled ribosomes mediated by trans-translation. Binds to transfer-messenger RNA (tmRNA), required for stable association of tmRNA with ribosomes. tmRNA and SmpB together mimic tRNA shape, replacing the anticodon stem-loop with SmpB. tmRNA is encoded by the ssrA gene; the 2 termini fold to resemble tRNA(Ala) and it encodes a 'tag peptide', a short internal open reading frame. During trans-translation Ala-aminoacylated tmRNA acts like a tRNA, entering the A-site of stalled ribosomes, displacing the stalled mRNA. The ribosome then switches to translate the ORF on the tmRNA; the nascent peptide is terminated with the 'tag peptide' encoded by the tmRNA and targeted for degradation. The ribosome is freed to recommence translation, which seems to be the essential function of trans-translation. This is SsrA-binding protein from Shewanella sediminis (strain HAW-EB3).